Reading from the N-terminus, the 209-residue chain is 3-demethoxyubiquinol 3-hydroxylase (209 aa).

Residues 23 to 36 (PHATRAAPAPAQAP) are compositionally biased toward low complexity. A disordered region spans residues 23–42 (PHATRAAPAPAQAPGEMTDS). Fe cation-binding residues include glutamate 58, glutamate 88, histidine 91, glutamate 140, glutamate 172, and histidine 175.

This sequence belongs to the COQ7 family. The cofactor is Fe cation.

Its subcellular location is the cell membrane. The enzyme catalyses a 5-methoxy-2-methyl-3-(all-trans-polyprenyl)benzene-1,4-diol + AH2 + O2 = a 3-demethylubiquinol + A + H2O. It participates in cofactor biosynthesis; ubiquinone biosynthesis. Catalyzes the hydroxylation of 2-nonaprenyl-3-methyl-6-methoxy-1,4-benzoquinol during ubiquinone biosynthesis. This is 3-demethoxyubiquinol 3-hydroxylase from Variovorax paradoxus (strain S110).